The chain runs to 454 residues: MDILLLGLNYKTAPVEIREKFTFSDDGTARALHLLSQTKSIAECIILGTCNRTEIYVVCDQANIGRDYTRRFLAEWFGVEKEQFKDHLYIKENEQAIEHLFRVSSGLDSMVMGETQILGQVRDAFLLGQEHQTTGTVFNTLFKQAITFAKRAHTETAIGQNAVSVSYAAVELGKKIFGSFAGKSVLIVGAGKMSELTAKHLHANGSERVMVANRTLERAQLLAEKFKGDSCTMEQLPEALLTADIVISSTGATGYVLGKKELAPIMKQRKHRPLFMVDIAVPRDLNPDLHDLDNVFLYDIDDLEGIVASNVAERSREAERLDVMIQEEIVAFTTWYQTLGVAPLIAALRDKANTIQSEAMRKIENKLPNLSEREMHIIRKTTKGIVNQLLHDPVVRLKEMAATKDGEEVLDIFEKMFALEEILERKEQEAIWANDKNKQTSSSREQVLVSRFPD.

Substrate contacts are provided by residues 49-52 (TCNR), S109, 114-116 (ETQ), and Q120. C50 serves as the catalytic Nucleophile. 189–194 (GAGKMS) contacts NADP(+). The interval 434 to 454 (NDKNKQTSSSREQVLVSRFPD) is disordered.

The protein belongs to the glutamyl-tRNA reductase family. In terms of assembly, homodimer.

The enzyme catalyses (S)-4-amino-5-oxopentanoate + tRNA(Glu) + NADP(+) = L-glutamyl-tRNA(Glu) + NADPH + H(+). Its pathway is porphyrin-containing compound metabolism; protoporphyrin-IX biosynthesis; 5-aminolevulinate from L-glutamyl-tRNA(Glu): step 1/2. Catalyzes the NADPH-dependent reduction of glutamyl-tRNA(Glu) to glutamate 1-semialdehyde (GSA). The chain is Glutamyl-tRNA reductase from Brevibacillus brevis (strain 47 / JCM 6285 / NBRC 100599).